The chain runs to 820 residues: Penicillin-binding protein 1A (820 aa).

Positions 1–120 (MNSDGRHHQS…PAGRLPQPRV (120 aa)) are disordered. Residues 41-53 (TDDRSAPHADSIE) are compositionally biased toward basic and acidic residues. Residues 139–159 (LTAAVVILLPMVTFTMAYLIV) form a helical membrane-spanning segment. Residues 180 to 360 (GSEIAKIVPP…RWNWVLDGMV (181 aa)) form a transglycosylase region. Glu213 (proton donor; for transglycosylase activity) is an active-site residue. Residues 453–743 (AVVSIDPHNG…PSDIWKATMD (291 aa)) form a transpeptidase region. Ser487 functions as the Acyl-ester intermediate; for transpeptidase activity in the catalytic mechanism. Low complexity predominate over residues 792-804 (ITIPIGPPTTITL). The segment at 792-820 (ITIPIGPPTTITLAPPPPAPPAATPTPPP) is disordered. Residues 805–820 (APPPPAPPAATPTPPP) show a composition bias toward pro residues.

This sequence in the N-terminal section; belongs to the glycosyltransferase 51 family. The protein in the C-terminal section; belongs to the transpeptidase family. In terms of assembly, interacts with RipA via its transpeptidase domain (residues 561-820).

The protein localises to the cell membrane. The catalysed reaction is [GlcNAc-(1-&gt;4)-Mur2Ac(oyl-L-Ala-gamma-D-Glu-L-Lys-D-Ala-D-Ala)](n)-di-trans,octa-cis-undecaprenyl diphosphate + beta-D-GlcNAc-(1-&gt;4)-Mur2Ac(oyl-L-Ala-gamma-D-Glu-L-Lys-D-Ala-D-Ala)-di-trans,octa-cis-undecaprenyl diphosphate = [GlcNAc-(1-&gt;4)-Mur2Ac(oyl-L-Ala-gamma-D-Glu-L-Lys-D-Ala-D-Ala)](n+1)-di-trans,octa-cis-undecaprenyl diphosphate + di-trans,octa-cis-undecaprenyl diphosphate + H(+). It catalyses the reaction Preferential cleavage: (Ac)2-L-Lys-D-Ala-|-D-Ala. Also transpeptidation of peptidyl-alanyl moieties that are N-acyl substituents of D-alanine.. The protein operates within cell wall biogenesis; peptidoglycan biosynthesis. Functionally, cell wall formation. Synthesis of cross-linked peptidoglycan from the lipid intermediates. The enzyme has a penicillin-insensitive transglycosylase N-terminal domain (formation of linear glycan strands) and a penicillin-sensitive transpeptidase C-terminal domain (cross-linking of the peptide subunits). Has little peptidoglycan hydrolytic activity; however it inhibits the synergistic peptidoglycan hydrolysis of RipA plus RpfB. In Mycobacterium tuberculosis (strain ATCC 25618 / H37Rv), this protein is Penicillin-binding protein 1A (ponA1).